Here is a 382-residue protein sequence, read N- to C-terminus: Mannitol-1-phosphate 5-dehydrogenase (382 aa).

3–14 (ALHFGAGNIGRG) contributes to the NAD(+) binding site.

This sequence belongs to the mannitol dehydrogenase family.

It carries out the reaction D-mannitol 1-phosphate + NAD(+) = beta-D-fructose 6-phosphate + NADH + H(+). In Cronobacter sakazakii (strain ATCC BAA-894) (Enterobacter sakazakii), this protein is Mannitol-1-phosphate 5-dehydrogenase.